The sequence spans 818 residues: Protein Cep78 homolog (818 aa).

Disordered stretches follow at residues 513 to 589 (LDVE…HEFA), 691 to 748 (RQAN…TEAT), and 768 to 798 (KQSESMSLTEEAGDGDAGGGGGSGDFGDQNV). Residues 514 to 539 (DVEEEEEEEEEEQQAEESQSESEPQN) show a composition bias toward acidic residues. Residues 561-589 (VRSEIKYVENNPKEAAKKNRESKSDHEFA) show a composition bias toward basic and acidic residues. The span at 782-792 (GDAGGGGGSGD) shows a compositional bias: gly residues.

The protein belongs to the CEP78 family.

The protein localises to the cytoplasm. It is found in the cytoskeleton. It localises to the microtubule organizing center. The protein resides in the centrosome. Its subcellular location is the centriole. The protein localises to the cilium basal body. Its function is as follows. May play a role in cilium biogenesis. This Drosophila melanogaster (Fruit fly) protein is Protein Cep78 homolog.